Here is a 542-residue protein sequence, read N- to C-terminus: Protein lin-9 homolog (542 aa).

At A2 the chain carries N-acetylalanine. K21 is covalently cross-linked (Glycyl lysine isopeptide (Lys-Gly) (interchain with G-Cter in SUMO2)). Phosphoserine occurs at positions 65 and 95. Phosphothreonine occurs at positions 96 and 304. Residues S309 and S321 each carry the phosphoserine modification.

It belongs to the lin-9 family. Component of the DREAM complex (also named LINC complex) at least composed of E2F4, E2F5, LIN9, LIN37, LIN52, LIN54, MYBL1, MYBL2, RBL1, RBL2, RBBP4, TFDP1 and TFDP2. The complex exists in quiescent cells where it represses cell cycle-dependent genes. It dissociates in S phase when LIN9, LIN37, LIN52 and LIN54 form a subcomplex that binds to MYBL2. Interacts with RB1.

Its subcellular location is the nucleus. It is found in the nucleoplasm. Acts as a tumor suppressor. Inhibits DNA synthesis. Its ability to inhibit oncogenic transformation is mediated through its association with RB1. Plays a role in the expression of genes required for the G1/S transition. This is Protein lin-9 homolog (Lin9) from Mus musculus (Mouse).